The primary structure comprises 391 residues: Ferrochelatase (391 aa).

Fe cation is bound by residues His-196 and Glu-281.

Belongs to the ferrochelatase family.

Its subcellular location is the cytoplasm. It carries out the reaction heme b + 2 H(+) = protoporphyrin IX + Fe(2+). Its pathway is porphyrin-containing compound metabolism; protoheme biosynthesis; protoheme from protoporphyrin-IX: step 1/1. Functionally, catalyzes the ferrous insertion into protoporphyrin IX. The protein is Ferrochelatase of Synechococcus sp. (strain WH7803).